A 65-amino-acid polypeptide reads, in one-letter code: Lantipeptide Flvbeta.h (65 aa).

The propeptide at 1 to 27 is cleaved by FlvT; the sequence is MERYGHLAGVIPVDEIDDMFESNVIGG. At Thr-28 the chain carries 2,3-didehydrobutyrine; by FlvM2. The segment at residues 29 to 33 is a cross-link (lanthionine (Ser-Cys); by FlvM2); it reads SSIDC. Residue Ser-30 is modified to 2,3-didehydroalanine (Ser); by FlvM2. Thr-44 carries the 2,3-didehydrobutyrine; by FlvM2 modification. The beta-methyllanthionine (Thr-Cys); by FlvM2 cross-link spans 48–54; sequence TVRIEFC. The lanthionine (Ser-Cys); by FlvM2 cross-link spans 56–59; it reads SAAC. The beta-methyllanthionine (Thr-Cys); by FlvM2 cross-link spans 60–63; the sequence is TYSC.

Contains LL-lanthionine, DL-lanthionine, and DL-beta-methyllanthionine, when coepressed in E.coli with the flavecin synthetase FlvM2.

It localises to the secreted. In terms of biological role, lanthionine-containing peptide that does probably not show antibacterial activity, since its analog [+2]Flvbeta.h does not show antibacterial activity against M.luteus. Also does not show antibiotic activity when tested with [Del2]Flvalpha.a, an analog of Flvalpha.a, which is encoded by the same operon than Flvbeta.h. The bactericidal activity of lantibiotics is based on depolarization of energized bacterial cytoplasmic membranes, initiated by the formation of aqueous transmembrane pores. In Ruminococcus flavefaciens, this protein is Lantipeptide Flvbeta.h.